Consider the following 129-residue polypeptide: Small ribosomal subunit protein uS11 (129 aa).

The protein belongs to the universal ribosomal protein uS11 family. Part of the 30S ribosomal subunit. Interacts with proteins S7 and S18. Binds to IF-3.

In terms of biological role, located on the platform of the 30S subunit, it bridges several disparate RNA helices of the 16S rRNA. Forms part of the Shine-Dalgarno cleft in the 70S ribosome. This chain is Small ribosomal subunit protein uS11, found in Psychrobacter arcticus (strain DSM 17307 / VKM B-2377 / 273-4).